Consider the following 320-residue polypeptide: GMP reductase (320 aa).

The active-site Thioimidate intermediate is the Cys-174. 203–226 (IIADGGLRVNGDIAKSIRFGATMC) serves as a coordination point for NADP(+).

It belongs to the IMPDH/GMPR family. GuaC type 2 subfamily.

The catalysed reaction is IMP + NH4(+) + NADP(+) = GMP + NADPH + 2 H(+). Catalyzes the irreversible NADPH-dependent deamination of GMP to IMP. It functions in the conversion of nucleobase, nucleoside and nucleotide derivatives of G to A nucleotides, and in maintaining the intracellular balance of A and G nucleotides. The sequence is that of GMP reductase from Mesoplasma florum (strain ATCC 33453 / NBRC 100688 / NCTC 11704 / L1) (Acholeplasma florum).